We begin with the raw amino-acid sequence, 84 residues long: Small ribosomal subunit protein bS20 (84 aa).

The interval methionine 1 to methionine 25 is disordered.

This sequence belongs to the bacterial ribosomal protein bS20 family.

Functionally, binds directly to 16S ribosomal RNA. The polypeptide is Small ribosomal subunit protein bS20 (Pediococcus pentosaceus (strain ATCC 25745 / CCUG 21536 / LMG 10740 / 183-1w)).